The following is a 160-amino-acid chain: Anaerobic nitrite reductase AHB1 (160 aa).

The 150-residue stretch at 8–157 (VFTEEQEALV…LVAAIKAEMN (150 aa)) folds into the Globin domain. The Homodimerization signature appears at 41–45 (EIAPT). Heme b-binding residues include Ser51, Lys65, His69, Arg99, Ser103, and His104. The Homodimerization motif lies at 111-123 (DEHFEVAKYALLE).

Belongs to the plant globin family. In terms of assembly, homodimer. Heme b serves as cofactor. Expressed in roots and rosette leaves.

The protein resides in the cytoplasm. The protein localises to the nucleus. The catalysed reaction is Fe(III)-heme b-[protein] + nitric oxide + H2O = Fe(II)-heme b-[protein] + nitrite + 2 H(+). Phytoglobin that reduces nitrite to nitric oxide (NO) under anoxic conditions (e.g. during flooding or in waterlogged soil). May not function as an oxygen storage or transport protein. Has an unusually high affinity for O(2) through an hexacoordinate heme iron because of a very low dissociation constant. The protein is Anaerobic nitrite reductase AHB1 of Arabidopsis thaliana (Mouse-ear cress).